The primary structure comprises 194 residues: Probable GTP-binding protein EngB (194 aa).

In terms of domain architecture, EngB-type G spans Asp-22–Glu-194. GTP contacts are provided by residues Gly-30 to Ser-37, Gly-57 to Thr-61, Asp-75 to Gly-78, Thr-142 to Asp-145, and Phe-174 to Ser-176. 2 residues coordinate Mg(2+): Ser-37 and Thr-59.

This sequence belongs to the TRAFAC class TrmE-Era-EngA-EngB-Septin-like GTPase superfamily. EngB GTPase family. The cofactor is Mg(2+).

Functionally, necessary for normal cell division and for the maintenance of normal septation. This chain is Probable GTP-binding protein EngB, found in Listeria welshimeri serovar 6b (strain ATCC 35897 / DSM 20650 / CCUG 15529 / CIP 8149 / NCTC 11857 / SLCC 5334 / V8).